Consider the following 358-residue polypeptide: Tyrosinase ustQ (358 aa).

A glycan (N-linked (GlcNAc...) asparagine) is linked at Asn28. A helical transmembrane segment spans residues Phe37 to Val57. Residues Asn91 and Asn109 are each glycosylated (N-linked (GlcNAc...) asparagine). Cu cation is bound by residues His128 and His137. N-linked (GlcNAc...) asparagine glycans are attached at residues Asn172 and Asn214. 3 residues coordinate Cu cation: His266, His270, and His292. N-linked (GlcNAc...) asparagine glycosylation is found at Asn321 and Asn325.

This sequence belongs to the tyrosinase family. Cu(2+) is required as a cofactor.

The protein resides in the membrane. The enzyme catalyses 2 L-dopa + O2 = 2 L-dopaquinone + 2 H2O. It carries out the reaction L-tyrosine + O2 = L-dopaquinone + H2O. Its pathway is mycotoxin biosynthesis. Tyrosinase; part of the gene cluster that mediates the biosynthesis of the secondary metabolite ustiloxin B, an antimitotic tetrapeptide. First, ustA is processed by the subtilisin-like endoprotease Kex2 that is outside the ustiloxin B gene cluster, at the C-terminal side of Arg-Lys, after transfer to Golgi apparatus through the endoplasmic reticulum (ER). Cleavage by KEX2 generates 16 peptides YAIG-I to YAIG-XVI. To process the precursor peptide further, at least two peptidases are necessary to cleave the N-terminal and C-terminal sides of the Tyr-Ala-Ile-Gly core peptide which serves as backbone for the synthesis of ustiloxin B, through cyclization and modification of the tyrosine with a non-protein coding amino acid, norvaline. One of the two peptidases must be the serine peptidase ustP; and the other pepdidase is probably ustH. Macrocyclization of the core peptide derived from ustA requires the tyrosinase ustQ, as well as the homologous oxidases ustYa and ustYb, and leads to the production of the first cyclization product N-desmethylustiloxin F. For the formation of N-desmethylustiloxin F, three oxidation steps are required, hydroxylation at the benzylic position, hydroxylation at either the aromatic ring of Tyr or beta-position of Ile, and oxidative cyclization. UstQ may catalyze the oxidation of a phenol moiety, whereas the ustYa and ustYb are most likely responsible for the remaining two-step oxidations. N-desmethylustiloxin F is then methylated by ustM to yield ustiloxin F which in turn substrate of the cytochrome P450 monooxygenase ustC which catalyzes the formation of S-deoxyustiloxin H. The flavoprotein monooxygenases ustF1 and ustF2 then participate in the modification of the side chain of S-deoxyustiloxin H, leading to the synthesis of an oxime intermediate, via ustiloxin H. Finally, carboxylative dehydration performed by the cysteine desulfurase-like protein ustD yields ustiloxin B. In Aspergillus flavus (strain ATCC 200026 / FGSC A1120 / IAM 13836 / NRRL 3357 / JCM 12722 / SRRC 167), this protein is Tyrosinase ustQ.